The primary structure comprises 75 residues: Putative UPF0377 protein YJL222W-A (75 aa).

This sequence belongs to the UPF0377 family.

This is Putative UPF0377 protein YJL222W-A from Saccharomyces cerevisiae (strain ATCC 204508 / S288c) (Baker's yeast).